A 352-amino-acid polypeptide reads, in one-letter code: C-glycoside deglycosidase alpha subunit (352 aa).

A Mn(2+)-binding site is contributed by E147. Residue H149 is the Proton acceptor of the active site. Positions 179, 269, and 305 each coordinate Mn(2+).

The protein belongs to the C-glycoside deglycosidase alpha subunit family. Heterodimer composed of an alpha subunit (CarB2) and a beta subunit (CarC2). It depends on a divalent metal cation as a cofactor.

The enzyme catalyses 3''-dehydroorientin = 1,5-anhydro-D-erythro-hex-1-en-3-ulose + luteolin. With respect to regulation, activity is strongly reduced in the presence of chelating agents. In terms of biological role, carbon-carbon bond-cleaving enzyme which participates in the metabolism of C-glycosides. Acts on the C8-glycosylated compound 3''-dehydroorientin (3''-oxo-orientin). This chain is C-glycoside deglycosidase alpha subunit, found in Arthrobacter globiformis (strain ATCC 8010 / DSM 20124 / JCM 1332 / NBRC 12137 / NCIMB 8907 / NRRL B-2979 / 168).